Consider the following 352-residue polypeptide: UDP-N-acetylglucosamine--N-acetylmuramyl-(pentapeptide) pyrophosphoryl-undecaprenol N-acetylglucosamine transferase (352 aa).

UDP-N-acetyl-alpha-D-glucosamine-binding positions include 14-16 (TGG), Asn124, Arg164, Ser185, and Gln285.

This sequence belongs to the glycosyltransferase 28 family. MurG subfamily.

It is found in the cell inner membrane. The enzyme catalyses di-trans,octa-cis-undecaprenyl diphospho-N-acetyl-alpha-D-muramoyl-L-alanyl-D-glutamyl-meso-2,6-diaminopimeloyl-D-alanyl-D-alanine + UDP-N-acetyl-alpha-D-glucosamine = di-trans,octa-cis-undecaprenyl diphospho-[N-acetyl-alpha-D-glucosaminyl-(1-&gt;4)]-N-acetyl-alpha-D-muramoyl-L-alanyl-D-glutamyl-meso-2,6-diaminopimeloyl-D-alanyl-D-alanine + UDP + H(+). It functions in the pathway cell wall biogenesis; peptidoglycan biosynthesis. Functionally, cell wall formation. Catalyzes the transfer of a GlcNAc subunit on undecaprenyl-pyrophosphoryl-MurNAc-pentapeptide (lipid intermediate I) to form undecaprenyl-pyrophosphoryl-MurNAc-(pentapeptide)GlcNAc (lipid intermediate II). The chain is UDP-N-acetylglucosamine--N-acetylmuramyl-(pentapeptide) pyrophosphoryl-undecaprenol N-acetylglucosamine transferase from Chlamydia trachomatis serovar A (strain ATCC VR-571B / DSM 19440 / HAR-13).